Consider the following 156-residue polypeptide: D-aminoacyl-tRNA deacylase (156 aa).

Residues 139 to 140 (GP) carry the Gly-cisPro motif, important for rejection of L-amino acids motif.

It belongs to the DTD family. In terms of assembly, homodimer.

The protein localises to the cytoplasm. It catalyses the reaction glycyl-tRNA(Ala) + H2O = tRNA(Ala) + glycine + H(+). The catalysed reaction is a D-aminoacyl-tRNA + H2O = a tRNA + a D-alpha-amino acid + H(+). In terms of biological role, an aminoacyl-tRNA editing enzyme that deacylates mischarged D-aminoacyl-tRNAs. Also deacylates mischarged glycyl-tRNA(Ala), protecting cells against glycine mischarging by AlaRS. Acts via tRNA-based rather than protein-based catalysis; rejects L-amino acids rather than detecting D-amino acids in the active site. By recycling D-aminoacyl-tRNA to D-amino acids and free tRNA molecules, this enzyme counteracts the toxicity associated with the formation of D-aminoacyl-tRNA entities in vivo and helps enforce protein L-homochirality. This chain is D-aminoacyl-tRNA deacylase, found in Marinobacter nauticus (strain ATCC 700491 / DSM 11845 / VT8) (Marinobacter aquaeolei).